Reading from the N-terminus, the 453-residue chain is Allantoinase (453 aa).

Zn(2+)-binding residues include His59, His61, Lys146, His186, His242, and Asp315. The residue at position 146 (Lys146) is an N6-carboxylysine.

Belongs to the metallo-dependent hydrolases superfamily. Allantoinase family. In terms of assembly, homotetramer. Requires Zn(2+) as cofactor. Carboxylation allows a single lysine to coordinate two zinc ions.

It carries out the reaction (S)-allantoin + H2O = allantoate + H(+). It functions in the pathway nitrogen metabolism; (S)-allantoin degradation; allantoate from (S)-allantoin: step 1/1. Catalyzes the conversion of allantoin (5-ureidohydantoin) to allantoic acid by hydrolytic cleavage of the five-member hydantoin ring. This chain is Allantoinase, found in Salmonella gallinarum (strain 287/91 / NCTC 13346).